Here is a 98-residue protein sequence, read N- to C-terminus: ESAT-6-like protein EsxM (98 aa).

Belongs to the WXG100 family. CFP-10 subfamily.

It is found in the secreted. Its function is as follows. Alters the host macrophage cytoskeleton and enhances macrophage motility. Promotes granuloma efflux, extrapulmonary dissemination of infection and bone disease. The protein is ESAT-6-like protein EsxM of Mycobacterium marinum (strain ATCC BAA-535 / M).